A 187-amino-acid polypeptide reads, in one-letter code: Epididymal-specific lipocalin-10 (187 aa).

The N-terminal stretch at 1–19 (MRQGLLVLALVLVLVLVLA) is a signal peptide. An intrachain disulfide couples cysteine 90 to cysteine 163. The N-linked (GlcNAc...) asparagine glycan is linked to asparagine 149. Lysine 170 carries the N6-acetyllysine modification.

It belongs to the calycin superfamily. Lipocalin family.

Its subcellular location is the secreted. In terms of biological role, may play a role in male fertility. May act as a retinoid carrier protein within the epididymis. The polypeptide is Epididymal-specific lipocalin-10 (LCN10) (Homo sapiens (Human)).